The sequence spans 386 residues: O-methyltransferase 12 (386 aa).

S-adenosyl-L-homocysteine contacts are provided by Ser207, Gly231, Asp254, Asp274, and Lys288. Position 254 (Asp254) interacts with S-adenosyl-L-methionine. The active-site Proton acceptor is the His292.

The protein belongs to the class I-like SAM-binding methyltransferase superfamily. Cation-independent O-methyltransferase family. Homodimer. In terms of tissue distribution, expressed at high levels in all tissues.

The catalysed reaction is 4-hydroxy-3,5-dimethoxyphenethylamine + S-adenosyl-L-methionine = mescaline + S-adenosyl-L-homocysteine + H(+). The enzyme catalyses dopamine + S-adenosyl-L-methionine = 4-methoxytyramine + S-adenosyl-L-homocysteine + H(+). It participates in aromatic compound metabolism. The protein operates within alkaloid biosynthesis. Functionally, O-methyltransferase participating in the biosynthesis of natural products derived from phenylethylamine, including mescaline, a natural hallucinogen potentially used in psychotherapeutic treatments. Catalyzes the O-methylation of dopamine, 4-hydroxy-3,5-dimethoxyphenethylamine, 4,5-dihydroxy-3-methoxyphenethylamine and N-methyl-4,5-dihydroxy-3-methoxyphenethylamine. Also involved in the conversion of N-methyl-4-hydroxy-3,5-dimethoxyphenethylamine to N-methylmescaline. The polypeptide is O-methyltransferase 12 (Lophophora williamsii (Peyote)).